A 131-amino-acid polypeptide reads, in one-letter code: Large ribosomal subunit protein uL22c (131 aa).

This sequence belongs to the universal ribosomal protein uL22 family. Part of the 50S ribosomal subunit.

The protein resides in the plastid. Functionally, this protein binds specifically to 23S rRNA. In terms of biological role, the globular domain of the protein is located near the polypeptide exit tunnel on the outside of the subunit, while an extended beta-hairpin is found that lines the wall of the exit tunnel in the center of the 70S ribosome. The polypeptide is Large ribosomal subunit protein uL22c (rpl22) (Aneura mirabilis (Parasitic liverwort)).